Here is a 115-residue protein sequence, read N- to C-terminus: Parathyroid hormone (115 aa).

A signal peptide spans 1–25 (MIPAKDMAKVMIVMLAICFLTKSDG). Residues 26–31 (KSVKKR) constitute a propeptide that is removed on maturation. The interval 51–69 (RVEWLRKKLQDVHNFIALG) is important for receptor binding. The interval 72-96 (LAPRDAGSQRPRKKEDNILVESHEK) is disordered. Residues 84–96 (KKEDNILVESHEK) are compositionally biased toward basic and acidic residues.

This sequence belongs to the parathyroid hormone family. As to quaternary structure, interacts with PTH1R (via N-terminal extracellular domain).

Its subcellular location is the secreted. Functionally, parathyroid hormone elevates calcium level by dissolving the salts in bone and preventing their renal excretion. Acts by binding to its receptor, PTH1R, activating G protein-coupled receptor signaling. Stimulates [1-14C]-2-deoxy-D-glucose (2DG) transport and glycogen synthesis in osteoblastic cells. The sequence is that of Parathyroid hormone (PTH) from Macaca fascicularis (Crab-eating macaque).